The primary structure comprises 314 residues: MTQTLPAGLTATAMVAASSANLGPGFDSLGLALSLYDEIVVETVDSGLTVTVEGEGAGQVALDSSHLVVRAIEAGLRATGCVAPGLVVRCRNDIPHSRGLGSSAAAVVGGLAAANGLVSQTDWTPLTVEQLIQLSSAFEGHPDNAAAAVLGGAVVTWTDGAGAQARYAAAPLRVHPDIHLFPAIPQQRSSTAETRVLLPDTVSHTDARFNLSRAALLVVALTERPDLLMAATEDVLHQPQRAAAMPASAEFLRVLRGCGVAAVLSGAGPAVIALSTEPELPAEAVEFGIANGFTIAEMAVGDGVRWSTGVAAGR.

95-105 (PHSRGLGSSAA) serves as a coordination point for ATP.

It belongs to the GHMP kinase family. Homoserine kinase subfamily.

Its subcellular location is the cytoplasm. The enzyme catalyses L-homoserine + ATP = O-phospho-L-homoserine + ADP + H(+). It functions in the pathway amino-acid biosynthesis; L-threonine biosynthesis; L-threonine from L-aspartate: step 4/5. In terms of biological role, catalyzes the ATP-dependent phosphorylation of L-homoserine to L-homoserine phosphate. In Mycobacterium sp. (strain JLS), this protein is Homoserine kinase.